The primary structure comprises 243 residues: 2-C-methyl-D-erythritol 4-phosphate cytidylyltransferase (243 aa).

Belongs to the IspD/TarI cytidylyltransferase family. IspD subfamily.

It carries out the reaction 2-C-methyl-D-erythritol 4-phosphate + CTP + H(+) = 4-CDP-2-C-methyl-D-erythritol + diphosphate. It functions in the pathway isoprenoid biosynthesis; isopentenyl diphosphate biosynthesis via DXP pathway; isopentenyl diphosphate from 1-deoxy-D-xylulose 5-phosphate: step 2/6. In terms of biological role, catalyzes the formation of 4-diphosphocytidyl-2-C-methyl-D-erythritol from CTP and 2-C-methyl-D-erythritol 4-phosphate (MEP). This chain is 2-C-methyl-D-erythritol 4-phosphate cytidylyltransferase, found in Aeromonas hydrophila subsp. hydrophila (strain ATCC 7966 / DSM 30187 / BCRC 13018 / CCUG 14551 / JCM 1027 / KCTC 2358 / NCIMB 9240 / NCTC 8049).